Reading from the N-terminus, the 122-residue chain is Flagellar protein FliT (122 aa).

Residues 1–50 are required for homodimerization; sequence MTSTVEFINRWQRIALLSQSLLELAQRGEWDLLLQQEVSYLQSIETVMEK. Residues 60–98 form a fliD binding region; it reads IQDMVAGYIKQTLDNEQLLKGLLQQRLDELSSLIGQSTR.

Belongs to the FliT family. Homodimer. Interacts with FliD and FlhC.

Its subcellular location is the cytoplasm. It localises to the cytosol. Its function is as follows. Dual-function protein that regulates the transcription of class 2 flagellar operons and that also acts as an export chaperone for the filament-capping protein FliD. As a transcriptional regulator, acts as an anti-FlhDC factor; it directly binds FlhC, thus inhibiting the binding of the FlhC/FlhD complex to class 2 promoters, resulting in decreased expression of class 2 flagellar operons. As a chaperone, effects FliD transition to the membrane by preventing its premature polymerization, and by directing it to the export apparatus. In Salmonella schwarzengrund (strain CVM19633), this protein is Flagellar protein FliT.